A 308-amino-acid polypeptide reads, in one-letter code: uncharacterized protein (308 aa).

This is an uncharacterized protein from Treponema pallidum (strain Nichols).